The following is a 419-amino-acid chain: MTTQLEQAWELAKQRFAAVGIDVEEALRQLDRLPVSMHCWQGDDVSGFENPEGSLTGGIQATGNYPGKARNASELRADLEQAMRLIPGPKRLNLHAIYLESDTSVARDQIKPEHFKNWVEWAKANQLGLDFNPSCFSHPLSADGFTLSHADDSIRQFWIDHCKASRRVSAYFGEQLGTPSVMNIWIPDGMKDITVDRLAPRQRLLAALDEVISEKLDPAHHIDAVESKLFGIGAESYTVGSNEFYMGYATSRQTALCLDAGHFHPTEVISDKISAAMLYVPQLLLHVSRPVRWDSDHVVLLDDETQAIASEIVRHDLFDRVHIGLDFFDASINRIAAWVIGTRNMKKALLRALLEPTTELRKLEAAGDYTARLALLEEQKSLPWQAVWEMYCQRHDTPVGSEWLESVRAYEKAILSQRG.

Positions 262, 294, and 296 each coordinate Mn(2+).

It belongs to the rhamnose isomerase family. Homotetramer. It depends on Mn(2+) as a cofactor.

The protein localises to the cytoplasm. It carries out the reaction L-rhamnopyranose = L-rhamnulose. Its pathway is carbohydrate degradation; L-rhamnose degradation; glycerone phosphate from L-rhamnose: step 1/3. Its function is as follows. Catalyzes the interconversion of L-rhamnose and L-rhamnulose. This Escherichia coli O7:K1 (strain IAI39 / ExPEC) protein is L-rhamnose isomerase.